A 657-amino-acid chain; its full sequence is Cyclic-di-AMP phosphodiesterase PdeA (657 aa).

A run of 2 helical transmembrane segments spans residues 13–35 (PLYG…SWWL) and 37–53 (ALVV…MFYF). Positions 74 to 137 (RSEEEALVEM…ITGNDEKGIM (64 aa)) are PAS-like. Residues 175–303 (NKSVFAVIFL…GGDQVVIKQP (129 aa)) form the GGDEF domain. Residues 342 to 498 (VFVMGHRYPD…IEATALLSGI (157 aa)) form a DHH region. Residues His347, Asp351, Asp353, Asp422, His446, and Asp501 each contribute to the Mn(2+) site. The tract at residues 592–645 (VITLRPDKLIGISARSLGQINVQVIMEKLGGGGHLSNAATQLKDVTIAEAEKQL) is DHHA1.

Belongs to the GdpP/PdeA phosphodiesterase family. Heme b is required as a cofactor. Requires Mn(2+) as cofactor.

The protein resides in the cell membrane. The catalysed reaction is 3',3'-c-di-AMP + H2O = 5'-O-phosphonoadenylyl-(3'-&gt;5')-adenosine + H(+). Functionally, has phosphodiesterase (PDE) activity against cyclic-di-AMP (c-di-AMP). Overexpression decreases export of c-di-AMP, leads to slightly increased susceptibility to the antibiotic cefuroxime and somewhat slower growth in macrophages. There are at least 2 PDEs for c-di-AMP in this bacteria (this one and pgpH); this may be the major PDE for intracellular growth in host macrophages. During host infection c-di-AMP is secreted into the host cytoplasm which leads to interferon-beta production and secretion by the host. c-di-AMP is a second messenger that mediates growth, cell wall stability and virulence. May monitor cellular heme or NO levels. The polypeptide is Cyclic-di-AMP phosphodiesterase PdeA (Listeria monocytogenes serotype 1/2a (strain 10403S)).